We begin with the raw amino-acid sequence, 353 residues long: Homeobox protein Mohawk (353 aa).

Over residues 18–27 (RGTPDRERGS) the composition is skewed to basic and acidic residues. The segment at 18 to 50 (RGTPDRERGSRTFSGFLDNPHTGPEVGIPDGPP) is disordered. Positions 71-132 (VRHKRQALQD…NARRRLKNTV (62 aa)) form a DNA-binding region, homeobox; TALE-type. Disordered stretches follow at residues 157–183 (LSVS…EEGY) and 243–302 (MGKT…PSKD).

This sequence belongs to the TALE/IRO homeobox family.

The protein localises to the nucleus. In terms of biological role, may act as a morphogenetic regulator of cell adhesion. Participates in the early events that lead to differentiation. The protein is Homeobox protein Mohawk (Mkx) of Mus musculus (Mouse).